A 367-amino-acid chain; its full sequence is Undecaprenyl-phosphate alpha-N-acetylglucosaminyl 1-phosphate transferase (367 aa).

10 helical membrane passes run 3 to 23 (LLTVSTDLISIFLFTTLFLFF), 46 to 66 (LIPLVGGISVYAGICFTFGIV), 69 to 89 (YIPHASLYLACAGVLVFIGAL), 132 to 152 (VLGPFGYFLTLFAVWAAINAF), 158 to 178 (IDGLLGGLSCVSFAAIGMILW), 187 to 207 (IWCFAMIAAILPYIMLNLGIL), 213 to 233 (VFMGDAGSTLIGFTVIWILLE), 242 to 262 (ISPVTALWIIAIPLMDMVAIM), 294 to 314 (AFVLITLAAALLASIGVLAEY), and 318 to 338 (VPEWVMLVLFLLAFFLYGYCI).

This sequence belongs to the glycosyltransferase 4 family. WecA subfamily. Requires Mg(2+) as cofactor. Mn(2+) is required as a cofactor.

The protein resides in the cell inner membrane. The enzyme catalyses di-trans,octa-cis-undecaprenyl phosphate + UDP-N-acetyl-alpha-D-glucosamine = N-acetyl-alpha-D-glucosaminyl-di-trans,octa-cis-undecaprenyl diphosphate + UMP. The protein operates within bacterial outer membrane biogenesis; LPS O-antigen biosynthesis. It participates in bacterial outer membrane biogenesis; enterobacterial common antigen biosynthesis. Catalyzes the transfer of the GlcNAc-1-phosphate moiety from UDP-GlcNAc onto the carrier lipid undecaprenyl phosphate (C55-P), yielding GlcNAc-pyrophosphoryl-undecaprenyl (GlcNAc-PP-C55). The polypeptide is Undecaprenyl-phosphate alpha-N-acetylglucosaminyl 1-phosphate transferase (Escherichia coli O6:H1 (strain CFT073 / ATCC 700928 / UPEC)).